Reading from the N-terminus, the 122-residue chain is Large ribosomal subunit protein uL14 (122 aa).

This sequence belongs to the universal ribosomal protein uL14 family. In terms of assembly, part of the 50S ribosomal subunit. Forms a cluster with proteins L3 and L19. In the 70S ribosome, L14 and L19 interact and together make contacts with the 16S rRNA in bridges B5 and B8.

In terms of biological role, binds to 23S rRNA. Forms part of two intersubunit bridges in the 70S ribosome. The sequence is that of Large ribosomal subunit protein uL14 from Micrococcus luteus (strain ATCC 4698 / DSM 20030 / JCM 1464 / CCM 169 / CCUG 5858 / IAM 1056 / NBRC 3333 / NCIMB 9278 / NCTC 2665 / VKM Ac-2230) (Micrococcus lysodeikticus).